Reading from the N-terminus, the 385-residue chain is 1-deoxy-D-xylulose 5-phosphate reductoisomerase 1 (385 aa).

NADPH contacts are provided by Thr11, Gly12, Ser13, Ile14, Asn39, and Asn122. Position 123 (Lys123) interacts with 1-deoxy-D-xylulose 5-phosphate. Glu124 serves as a coordination point for NADPH. Asp148 lines the Mn(2+) pocket. Residues Ser149, Glu150, Ser174, and His197 each contribute to the 1-deoxy-D-xylulose 5-phosphate site. Glu150 is a Mn(2+) binding site. Residue Gly203 coordinates NADPH. 1-deoxy-D-xylulose 5-phosphate is bound by residues Ser210, Asn215, Lys216, and Glu219. Glu219 serves as a coordination point for Mn(2+).

It belongs to the DXR family. The cofactor is Mg(2+). It depends on Mn(2+) as a cofactor.

The catalysed reaction is 2-C-methyl-D-erythritol 4-phosphate + NADP(+) = 1-deoxy-D-xylulose 5-phosphate + NADPH + H(+). It participates in isoprenoid biosynthesis; isopentenyl diphosphate biosynthesis via DXP pathway; isopentenyl diphosphate from 1-deoxy-D-xylulose 5-phosphate: step 1/6. In terms of biological role, catalyzes the NADPH-dependent rearrangement and reduction of 1-deoxy-D-xylulose-5-phosphate (DXP) to 2-C-methyl-D-erythritol 4-phosphate (MEP). In Bacillus anthracis, this protein is 1-deoxy-D-xylulose 5-phosphate reductoisomerase 1.